Here is a 515-residue protein sequence, read N- to C-terminus: GMP synthase [glutamine-hydrolyzing] (515 aa).

The Glutamine amidotransferase type-1 domain occupies 10-200 (TIIVLDFGSQ…VFGVCGCSEG (191 aa)). Cys-87 serves as the catalytic Nucleophile. Residues His-174 and Glu-176 contribute to the active site. Positions 201–390 (WNMENFIEVE…LGIPDEIVWR (190 aa)) constitute a GMPS ATP-PPase domain. 228-234 (SGGVDSS) provides a ligand contact to ATP.

Homodimer.

It carries out the reaction XMP + L-glutamine + ATP + H2O = GMP + L-glutamate + AMP + diphosphate + 2 H(+). The protein operates within purine metabolism; GMP biosynthesis; GMP from XMP (L-Gln route): step 1/1. Its function is as follows. Catalyzes the synthesis of GMP from XMP. The protein is GMP synthase [glutamine-hydrolyzing] of Bacillus anthracis (strain A0248).